We begin with the raw amino-acid sequence, 97 residues long: ESAT-6-like protein EsxS (97 aa).

It belongs to the WXG100 family. CFP-10 subfamily. In terms of assembly, forms a tight complex with EsxR. Exists in heterodimeric and heterotetrameric forms.

The protein resides in the secreted. The protein is ESAT-6-like protein EsxS of Mycobacterium tuberculosis (strain ATCC 25618 / H37Rv).